Reading from the N-terminus, the 333-residue chain is Acetyltransferase Pat (333 aa).

Residues 88–91 (GEIA), 98–99 (RS), and Arg138 each bind 3',5'-cyclic AMP. The N-acetyltransferase domain maps to 156–318 (LMLRPVLPGD…GELSLGREMV (163 aa)). Substrate is bound at residue His173. A Mg(2+)-binding site is contributed by Asp214. Substrate-binding positions include 238 to 240 (FTV), 246 to 251 (GRGIGS), Asn277, and Arg286.

In terms of assembly, homodimer. Mg(2+) is required as a cofactor.

Autoinhibited and allosterically activated by 3,5-cyclic adenosine monophosphate (cAMP). An extensive conformational rearrangement relieves this autoinhibition by means of a substrate-mimicking lid that covers the protein-substrate binding surface. Its function is as follows. Catalyzes specifically the acetylation of the epsilon-amino group of a highly conserved lysine residue in acetyl-CoA synthetase (ACS). This acetylation results in the inactivation of ACS activity and could be important for mycobacteria to adjust to environmental changes. The polypeptide is Acetyltransferase Pat (Mycobacterium tuberculosis (strain ATCC 25618 / H37Rv)).